Here is a 576-residue protein sequence, read N- to C-terminus: High-affinity choline transporter 1 (576 aa).

The chain crosses the membrane as a helical span at residues 6 to 26 (GIVAIVFFYVLILVVGIWAGR). The Cytoplasmic segment spans residues 27–51 (KSKSSKELESEAGAATEEVMLAGRN). Residues 52–72 (IGTLVGIFTMTATWVGGAYIN) traverse the membrane as a helical segment. The Extracellular segment spans residues 73–82 (GTAEALYNGG). A helical membrane pass occupies residues 83–103 (LLGCQAPVGYAISLVMGGLLF). The Cytoplasmic portion of the chain corresponds to 104–126 (AKKMREEGYITMLDPFQHKYGQR). Residues 127–147 (IGGLMYVPALLGETFWTAAIL) traverse the membrane as a helical segment. Topologically, residues 148–165 (SALGATLSVILGIDMNAS) are extracellular. A helical membrane pass occupies residues 166 to 186 (VTLSACIAVFYTFTGGYYAVA). The Cytoplasmic segment spans residues 187–192 (YTDVVQ). A helical transmembrane segment spans residues 193-213 (LFCIFVGLWVCVPAAMVHDGA). Topologically, residues 214 to 233 (KDISRNAGDWIGEIGGFKET) are extracellular. The helical transmembrane segment at 234–254 (SLWIDCMLLLVFGGIPWQVYF) threads the bilayer. Over 255–270 (QRVLSSKTAHGAQTLS) the chain is Cytoplasmic. The helical transmembrane segment at 271–291 (FVAGVGCILMAIPPALIGAIA) threads the bilayer. Residues 292–319 (RNTDWRMTDYSPWNNGTKVESIPPDKRN) are Extracellular-facing. Asparagine 306 is a glycosylation site (N-linked (GlcNAc...) asparagine). The chain crosses the membrane as a helical span at residues 320-340 (MVVPLVFQYLTPRWVAFIGLG). Topologically, residues 341–378 (AVSAAVMSSADSSVLSAASMFAHNIWKLTIRPHASEKE) are cytoplasmic. A helical membrane pass occupies residues 379 to 399 (VIIVMRIAIICVGIMATIMAL). Over 400–408 (TIQSIYGLW) the chain is Extracellular. A helical membrane pass occupies residues 409-429 (YLCADLVYVILFPQLLCVVYM). The Cytoplasmic segment spans residues 430-437 (PRSNTYGS). Residues 438–458 (LAGYAVGLVLRLIGGEPLVSL) traverse the membrane as a helical segment. Residues 459–478 (PAFFHYPMYTDGVQYFPFRT) lie on the Extracellular side of the membrane. The helical transmembrane segment at 479 to 499 (TAMLSSMATIYIVSIQSEKLF) threads the bilayer. Over 500–576 (KSGRLSPEWD…DQSYYSTNSN (77 aa)) the chain is Cytoplasmic. The disordered stretch occupies residues 541–576 (APNGTPAPVHPNQQPSDENTLLHPYSDQSYYSTNSN). Over residues 566–576 (SDQSYYSTNSN) the composition is skewed to polar residues.

The protein belongs to the sodium:solute symporter (SSF) (TC 2.A.21) family. As to expression, detected in the nervous system, including the nerve ring and cholinergic motor neurons of the ventral nerve cord.

It is found in the membrane. Its function is as follows. Imports choline from the extracellular space to the neuron with high affinity. Choline uptake is the rate-limiting step in acetylcholine synthesis. Sodium ion and chloride ion dependent. The protein is High-affinity choline transporter 1 (cho-1) of Caenorhabditis elegans.